We begin with the raw amino-acid sequence, 174 residues long: Late lactation protein B (174 aa).

Residues 1-18 form the signal peptide; it reads MKVLFLTIALSLFSILQA. A disulfide bridge links Cys-77 with Cys-169.

This sequence belongs to the calycin superfamily. Lipocalin family. In terms of tissue distribution, mammary gland specific. Secreted in milk.

The protein resides in the secreted. Probably serves a role in the transport of a small ligand released during the hydrolysis of milk fat. The polypeptide is Late lactation protein B (LLPB) (Notamacropus eugenii (Tammar wallaby)).